The primary structure comprises 266 residues: PDZ domain-containing protein 9 (266 aa).

The region spanning 27 to 109 (KVIQTKLTVG…GTVLQIKAYR (83 aa)) is the PDZ domain.

This Mus musculus (Mouse) protein is PDZ domain-containing protein 9 (Pdzd9).